We begin with the raw amino-acid sequence, 79 residues long: Acyl carrier protein (79 aa).

Positions Glu2–Leu77 constitute a Carrier domain. An O-(pantetheine 4'-phosphoryl)serine modification is found at Ser37.

Belongs to the acyl carrier protein (ACP) family. In terms of processing, 4'-phosphopantetheine is transferred from CoA to a specific serine of apo-ACP by AcpS. This modification is essential for activity because fatty acids are bound in thioester linkage to the sulfhydryl of the prosthetic group.

It localises to the cytoplasm. It functions in the pathway lipid metabolism; fatty acid biosynthesis. Its function is as follows. Carrier of the growing fatty acid chain in fatty acid biosynthesis. The polypeptide is Acyl carrier protein (Azoarcus sp. (strain BH72)).